The following is a 467-amino-acid chain: Nuclear distribution protein nudF (467 aa).

The region spanning 9–41 (QAEELHKSIIAYLASVNLTESSAALRAELGDSV) is the LisH domain. Positions 60–87 (TSVVRLQKKIMDLESRCAALQSELDSAT) form a coiled coil. WD repeat units lie at residues 113 to 154 (GHRN…RTVK), 156 to 196 (HTKA…KNIR), 200 to 247 (GHDH…CVKT), 250 to 289 (GHVD…TKST), 292 to 352 (GHEH…IKTL), 354 to 393 (GHDN…KCVR), 398 to 428 (AHGH…NGTP), and 429 to 466 (AATS…RIFA). The interval 417–439 (GANGEAETNGTPAATSTTNGVRP) is disordered. Polar residues predominate over residues 422–436 (AETNGTPAATSTTNG).

It belongs to the WD repeat LIS1/nudF family. In terms of assembly, self-associates. Interacts with nudE and dynein.

Its subcellular location is the cytoplasm. The protein resides in the cytoskeleton. It is found in the spindle pole. Functionally, positively regulates the activity of the minus-end directed microtubule motor protein dynein. May enhance dynein-mediated microtubule sliding by targeting dynein to the microtubule plus end. Required for nuclear migration during vegetative growth as well as development. Required for retrograde early endosome (EE) transport from the hyphal tip. Required for localization of dynein to the mitotic spindle poles. Recruits additional proteins to the dynein complex at SPBs. This Aspergillus fumigatus (strain CBS 144.89 / FGSC A1163 / CEA10) (Neosartorya fumigata) protein is Nuclear distribution protein nudF.